Consider the following 127-residue polypeptide: Mitochondrial pyruvate carrier 2 (127 aa).

Residues 2–40 (AAAGARGLRATYHRLMDKVELLLPKKLRPLYNHPAGPRT) are Mitochondrial matrix-facing. Lys-26 is modified (N6-acetyllysine). Residues 41–61 (VFFWAPIMKWGLVCAGLADMA) form a helical membrane-spanning segment. Residues 62–72 (RPAEKLSTAQS) lie on the Mitochondrial intermembrane side of the membrane. A helical membrane pass occupies residues 73–90 (TVLMATGFIWSRYSLVII). Topologically, residues 91-92 (PK) are mitochondrial matrix. Residues 93–115 (NWSLFAVNFFVGSAGASQLFRIW) traverse the membrane as a helical segment. Residues 116-127 (RYNQELKSKGIQ) are Mitochondrial intermembrane-facing.

This sequence belongs to the mitochondrial pyruvate carrier (MPC) (TC 2.A.105) family. As to quaternary structure, homodimer. Homooligomer. Forms heterodimers with MPC1 and MPC1L. The heterodimer is the more stable and dominant form.

It localises to the mitochondrion inner membrane. The enzyme catalyses pyruvate(out) + H(+)(out) = pyruvate(in) + H(+)(in). Its function is as follows. Mediates the uptake of pyruvate into mitochondria. This is Mitochondrial pyruvate carrier 2 (Mpc2) from Mus musculus (Mouse).